The sequence spans 270 residues: Urease accessory protein UreD (270 aa).

It belongs to the UreD family. In terms of assembly, ureD, UreF and UreG form a complex that acts as a GTP-hydrolysis-dependent molecular chaperone, activating the urease apoprotein by helping to assemble the nickel containing metallocenter of UreC. The UreE protein probably delivers the nickel.

Its subcellular location is the cytoplasm. In terms of biological role, required for maturation of urease via the functional incorporation of the urease nickel metallocenter. The chain is Urease accessory protein UreD from Beijerinckia indica subsp. indica (strain ATCC 9039 / DSM 1715 / NCIMB 8712).